A 156-amino-acid polypeptide reads, in one-letter code: 6,7-dimethyl-8-ribityllumazine synthase (156 aa).

Residues phenylalanine 23, 57–59 (AYE), and 81–83 (AII) each bind 5-amino-6-(D-ribitylamino)uracil. A (2S)-2-hydroxy-3-oxobutyl phosphate-binding site is contributed by 86-87 (GT). Histidine 89 acts as the Proton donor in catalysis. Position 114 (phenylalanine 114) interacts with 5-amino-6-(D-ribitylamino)uracil. Residue arginine 128 participates in (2S)-2-hydroxy-3-oxobutyl phosphate binding.

This sequence belongs to the DMRL synthase family.

It catalyses the reaction (2S)-2-hydroxy-3-oxobutyl phosphate + 5-amino-6-(D-ribitylamino)uracil = 6,7-dimethyl-8-(1-D-ribityl)lumazine + phosphate + 2 H2O + H(+). It participates in cofactor biosynthesis; riboflavin biosynthesis; riboflavin from 2-hydroxy-3-oxobutyl phosphate and 5-amino-6-(D-ribitylamino)uracil: step 1/2. Its function is as follows. Catalyzes the formation of 6,7-dimethyl-8-ribityllumazine by condensation of 5-amino-6-(D-ribitylamino)uracil with 3,4-dihydroxy-2-butanone 4-phosphate. This is the penultimate step in the biosynthesis of riboflavin. The protein is 6,7-dimethyl-8-ribityllumazine synthase of Helicobacter acinonychis (strain Sheeba).